The following is a 1279-amino-acid chain: ATP-dependent helicase/nuclease subunit A (1279 aa).

The UvrD-like helicase ATP-binding domain maps to 4–499 (TKWTDEQRQA…VKLFKNFRSR (496 aa)). 25–32 (AGAGAGKT) is a binding site for ATP. The UvrD-like helicase C-terminal domain occupies 526–853 (EEALKVGASY…RIMSIHKSKG (328 aa)).

Belongs to the helicase family. AddA subfamily. Heterodimer of AddA and AddB/RexB. Mg(2+) is required as a cofactor.

The enzyme catalyses Couples ATP hydrolysis with the unwinding of duplex DNA by translocating in the 3'-5' direction.. It catalyses the reaction ATP + H2O = ADP + phosphate + H(+). Its function is as follows. The heterodimer acts as both an ATP-dependent DNA helicase and an ATP-dependent, dual-direction single-stranded exonuclease. Recognizes the chi site generating a DNA molecule suitable for the initiation of homologous recombination. The AddA nuclease domain is required for chi fragment generation; this subunit has the helicase and 3' -&gt; 5' nuclease activities. In Clostridium botulinum (strain Okra / Type B1), this protein is ATP-dependent helicase/nuclease subunit A.